Consider the following 250-residue polypeptide: Manganese transport system ATP-binding protein MntB (250 aa).

Positions 4–236 constitute an ABC transporter domain; that stretch reads VELDNVTVAY…NLQKTYGGRL (233 aa). 36 to 43 lines the ATP pocket; sequence GPNGAGKS.

Belongs to the ABC transporter superfamily. As to quaternary structure, the complex is probably composed of two ATP-binding proteins (MntB), two transmembrane proteins (MntC and MntD) and a solute-binding protein (MntA).

The protein resides in the cell membrane. In terms of biological role, probably part of the ABC transporter complex MntABCD involved in manganese import. Probably responsible for energy coupling to the transport system. The polypeptide is Manganese transport system ATP-binding protein MntB (Bacillus subtilis (strain 168)).